The following is a 145-amino-acid chain: Peptide methionine sulfoxide reductase MsrB (145 aa).

Residues 4-127 (SEELKQRIGD…NSAALKFIPY (124 aa)) enclose the MsrB domain. C116 acts as the Nucleophile in catalysis.

It belongs to the MsrB Met sulfoxide reductase family.

It carries out the reaction L-methionyl-[protein] + [thioredoxin]-disulfide + H2O = L-methionyl-(R)-S-oxide-[protein] + [thioredoxin]-dithiol. The protein is Peptide methionine sulfoxide reductase MsrB of Streptococcus pyogenes serotype M6 (strain ATCC BAA-946 / MGAS10394).